Reading from the N-terminus, the 410-residue chain is Cysteine desulfurase IscS (410 aa).

Pyridoxal 5'-phosphate contacts are provided by residues 79–80, asparagine 159, glutamine 187, and 207–209; these read AT and SGH. Lysine 210 bears the N6-(pyridoxal phosphate)lysine mark. Threonine 248 contributes to the pyridoxal 5'-phosphate binding site. Cysteine 334 acts as the Cysteine persulfide intermediate in catalysis. Residue cysteine 334 coordinates [2Fe-2S] cluster.

The protein belongs to the class-V pyridoxal-phosphate-dependent aminotransferase family. NifS/IscS subfamily. Homodimer. Forms a heterotetramer with IscU, interacts with other sulfur acceptors. It depends on pyridoxal 5'-phosphate as a cofactor.

Its subcellular location is the cytoplasm. It carries out the reaction (sulfur carrier)-H + L-cysteine = (sulfur carrier)-SH + L-alanine. Its pathway is cofactor biosynthesis; iron-sulfur cluster biosynthesis. Functionally, master enzyme that delivers sulfur to a number of partners involved in Fe-S cluster assembly, tRNA modification or cofactor biosynthesis. Catalyzes the removal of elemental sulfur atoms from cysteine to produce alanine. Functions as a sulfur delivery protein for Fe-S cluster synthesis onto IscU, an Fe-S scaffold assembly protein, as well as other S acceptor proteins. The chain is Cysteine desulfurase IscS from Ehrlichia chaffeensis (strain ATCC CRL-10679 / Arkansas).